A 400-amino-acid chain; its full sequence is Enoyl-[acyl-carrier-protein] reductase [NADH] 2 (400 aa).

NAD(+) contacts are provided by residues 48 to 53, 75 to 76, 112 to 113, and 141 to 142; these read GASSGF, FE, DA, and LA. Substrate is bound at residue Tyr-227. Tyr-237 (proton donor) is an active-site residue. Residues Lys-246 and 275–277 contribute to the NAD(+) site; that span reads LVT.

The protein belongs to the TER reductase family. In terms of assembly, monomer.

The enzyme catalyses a 2,3-saturated acyl-[ACP] + NAD(+) = a (2E)-enoyl-[ACP] + NADH + H(+). The protein operates within lipid metabolism; fatty acid biosynthesis. Involved in the final reduction of the elongation cycle of fatty acid synthesis (FAS II). Catalyzes the reduction of a carbon-carbon double bond in an enoyl moiety that is covalently linked to an acyl carrier protein (ACP). The sequence is that of Enoyl-[acyl-carrier-protein] reductase [NADH] 2 from Photobacterium profundum (strain SS9).